Consider the following 627-residue polypeptide: Phosphomethylpyrimidine synthase (627 aa).

Substrate contacts are provided by residues Asn233, Met262, Tyr291, His327, 347–349 (SRG), 388–391 (DGLR), and Glu427. Position 431 (His431) interacts with Zn(2+). Substrate is bound at residue Tyr454. His495 serves as a coordination point for Zn(2+). Positions 575, 578, and 583 each coordinate [4Fe-4S] cluster.

Belongs to the ThiC family. Homodimer. [4Fe-4S] cluster serves as cofactor.

The enzyme catalyses 5-amino-1-(5-phospho-beta-D-ribosyl)imidazole + S-adenosyl-L-methionine = 4-amino-2-methyl-5-(phosphooxymethyl)pyrimidine + CO + 5'-deoxyadenosine + formate + L-methionine + 3 H(+). Its pathway is cofactor biosynthesis; thiamine diphosphate biosynthesis. Catalyzes the synthesis of the hydroxymethylpyrimidine phosphate (HMP-P) moiety of thiamine from aminoimidazole ribotide (AIR) in a radical S-adenosyl-L-methionine (SAM)-dependent reaction. The protein is Phosphomethylpyrimidine synthase of Acidithiobacillus ferrooxidans (strain ATCC 23270 / DSM 14882 / CIP 104768 / NCIMB 8455) (Ferrobacillus ferrooxidans (strain ATCC 23270)).